The following is a 1322-amino-acid chain: MSRRKQAKPQHFQSDPEVASLPRRDGDTEKGQPSRPTKSKDAHVCGRCCAEFFELSDLLLHKKSCTKNQLVLIVNESPASPAKTFPPGPSLNDPDDQMKDAANKADQEDCSDLSEPKGLDREESMEVEVPVATTTTTTTGGSGGSGGSTLSGVTNITTPSCHSGCSSGTSAITTSLPQLGDLTTLGNFSVINSNVIIENLQSTKVAVAQFSQEARCGGASGGKLLISTLMEQLLALQQQQIHQLQLIEQIRHQILLLASQSADLPAAPSIPSQGTLRTSANPLTTLSSHLSQQLAVAAGLAQSLASQSANISGVKQLPHVQLPQSSSGTSIVPPSGGTSPNMSIVTAAVPTPSSEKVASNAGASHVSSPAVSASSSPAFAISSLLSPESNPLLPQPTPANAVFPTPLPNIATTAEDLNSLSALAQQRKSKPPNVTAFEAKSTSDEAFFKHKCRFCAKVFGSDSALQIHLRSHTGERPFKCNICGNRFSTKGNLKVHFQRHKEKYPHIQMNPYPVPEHLDNVPTSTGIPYGMSIPSEKPVTSWLDTKPVLPTLTTSVGLPLPPTLPSLTPFIKTEEPAPIPISHSAASPQGSVKSDSGAPDLATRNPSGVPEEVEGSAVPPFGGKGEESNMASSAVPTAGNSTLNSPVADGGPGGTTFTNPLLPLMSEQFKAKFPFGGLLDSAQASETSKLQQLVENIDKKATDPNECIICHRVLSCQSALKMHYRTHTGERPFKCKICGRAFTTKGNLKTHYSVHRAMPPLRVQHSCPICQKKFTNAVVLQQHIRMHMGGQIPNTPVPDNYPESMESDTGSFDEKNFDDLDNFSDENMEECPEGSIPDTPKSADASQDSLSSSPLPLEMSSIAALENQMKMINAGLAEQLQASLKSVENGSMEGDVLTNDSSSVGGDMESQSAGSPAISESTSSMQALSPSNSTQEFHKSPGMEEKPQRVGPGEFANGLSPTPVNGGALDLTSSHAEKIIKEDSLGILFPFRDRGKFKNTACDICGKTFACQSALDIHYRSHTKERPFICTVCNRGFSTKGNLKQHMLTHQMRDLPSQLFEPSSNLGPNQNSAVIPANSLSSLIKTEVNGFVHVSPQDSKDAPTSHVPQGPLSSSATSPVLLPALPRRTPKQHYCNTCGKTFSSSSALQIHERTHTGEKPFACTICGRAFTTKGNLKVHMGTHMWNSTPARRGRRLSVDGPMTFLGGNPVKFPEMFQKDLAARSGSGDPSSFWNQYTAALSNGLAMKANEISVIQNGGIPPIPGSLGSGSSPISGLTGNVEKLGNSEPSAPLAGLEKMASSENGTNFRFTRFVEDSKEIVTS.

Residues 1–41 (MSRRKQAKPQHFQSDPEVASLPRRDGDTEKGQPSRPTKSKD) form a disordered region. Positions 22–41 (PRRDGDTEKGQPSRPTKSKD) are enriched in basic and acidic residues. The C2H2-type 1; atypical zinc-finger motif lies at 43-65 (HVCGRCCAEFFELSDLLLHKKSC). A disordered region spans residues 78–128 (PASPAKTFPPGPSLNDPDDQMKDAANKADQEDCSDLSEPKGLDREESMEVE). Basic and acidic residues-rich tracts occupy residues 96-107 (DQMKDAANKADQ) and 114-124 (SEPKGLDREES). A Glycyl lysine isopeptide (Lys-Gly) (interchain with G-Cter in SUMO2) cross-link involves residue K440. 2 consecutive C2H2-type zinc fingers follow at residues 450-472 (HKCR…LRSH) and 478-500 (FKCN…FQRH). Residues 578–659 (PIPISHSAAS…GGPGGTTFTN (82 aa)) are disordered. The span at 584–594 (SAASPQGSVKS) shows a compositional bias: polar residues. Phosphoserine is present on residues S591, S594, and S596. Over residues 629–645 (NMASSAVPTAGNSTLNS) the composition is skewed to polar residues. Glycyl lysine isopeptide (Lys-Gly) (interchain with G-Cter in SUMO2) cross-links involve residues K672, K689, and K700. C2H2-type zinc fingers lie at residues 705–727 (NECI…YRTH), 733–755 (FKCK…YSVH), and 765–787 (HSCP…IRMH). Disordered regions lie at residues 789-855 (GGQI…SSPL) and 891-961 (SMEG…GLSP). Over residues 819–832 (DLDNFSDENMEECP) the composition is skewed to acidic residues. Low complexity predominate over residues 842 to 855 (SADASQDSLSSSPL). Over residues 898–935 (TNDSSSVGGDMESQSAGSPAISESTSSMQALSPSNSTQ) the composition is skewed to polar residues. Basic and acidic residues predominate over residues 936-948 (EFHKSPGMEEKPQ). S940 bears the Phosphoserine mark. Glycyl lysine isopeptide (Lys-Gly) (interchain with G-Cter in SUMO2) cross-links involve residues K946 and K981. 2 consecutive C2H2-type zinc fingers follow at residues 1000 to 1022 (TACD…YRSH) and 1028 to 1050 (FICT…MLTH). A Glycyl lysine isopeptide (Lys-Gly) (interchain with G-Cter in SUMO2) cross-link involves residue K1085. The disordered stretch occupies residues 1094 to 1119 (VSPQDSKDAPTSHVPQGPLSSSATSP). 2 C2H2-type zinc fingers span residues 1133–1155 (HYCN…ERTH) and 1161–1183 (FACT…MGTH). Residues K1218, K1297, and K1317 each participate in a glycyl lysine isopeptide (Lys-Gly) (interchain with G-Cter in SUMO2) cross-link.

It belongs to the sal C2H2-type zinc-finger protein family. In terms of assembly, may associate with NuRD histone deacetylase complex (HDAC). Interacts with components of HDAC complex including HDAC1, HDAC2, RBBP4, RBPP7, MTA1 and MTA2. Interacts with CCNQ. Interacts with NSD2 (via PHD-type zinc fingers 1, 2 and 3). As to expression, expressed in the metanephric mesenchyme surrounding ureteric bud.

It localises to the nucleus. In terms of biological role, transcriptional repressor involved in organogenesis. Plays an essential role in ureteric bud invasion during kidney development. This Mus musculus (Mouse) protein is Sal-like protein 1 (Sall1).